We begin with the raw amino-acid sequence, 218 residues long: Small ribosomal subunit protein uS3c (218 aa).

Residues 47-118 (VRRHMKNYSN…KLNISIAKVA (72 aa)) form the KH type-2 domain.

The protein belongs to the universal ribosomal protein uS3 family. Part of the 30S ribosomal subunit.

The protein resides in the plastid. The protein localises to the chloroplast. The polypeptide is Small ribosomal subunit protein uS3c (rps3) (Ginkgo biloba (Ginkgo)).